The chain runs to 521 residues: uncharacterized protein (521 aa).

Residues Gln-14–Gln-41 are a coiled coil. Composition is skewed to low complexity over residues Leu-238–Ser-266, Ser-275–Asn-353, and Pro-423–Pro-482. Disordered regions lie at residues Leu-238–Phe-357 and Thr-413–Gly-491.

This is an uncharacterized protein from Dictyostelium discoideum (Social amoeba).